We begin with the raw amino-acid sequence, 489 residues long: Ent-kaurenoic acid oxidase 2 (489 aa).

The chain crosses the membrane as a helical span at residues 5–25 (GLILMWFPLIILGLFVLKWVL). Position 436 (Cys436) interacts with heme.

Belongs to the cytochrome P450 family. It depends on heme as a cofactor. In terms of tissue distribution, widely expressed. Highly expressed in influorescence stem, influorescence, and silique tissue. Weakly expressed in cauline and rosette leaves. Expressed at a weaker level in stem and influorescence than AtKAO1/CYP88A3.

The protein localises to the endoplasmic reticulum membrane. It catalyses the reaction ent-kaur-16-en-19-oate + 3 reduced [NADPH--hemoprotein reductase] + 3 O2 = gibberellin A12 + 3 oxidized [NADPH--hemoprotein reductase] + 4 H2O + 4 H(+). It carries out the reaction ent-kaur-16-en-19-oate + reduced [NADPH--hemoprotein reductase] + O2 = ent-7alpha-hydroxykaur-16-en-19-oate + oxidized [NADPH--hemoprotein reductase] + H2O + H(+). The enzyme catalyses ent-7alpha-hydroxykaur-16-en-19-oate + reduced [NADPH--hemoprotein reductase] + O2 = gibberellin A12 aldehyde + oxidized [NADPH--hemoprotein reductase] + 2 H2O + H(+). The catalysed reaction is gibberellin A12 aldehyde + reduced [NADPH--hemoprotein reductase] + O2 = gibberellin A12 + oxidized [NADPH--hemoprotein reductase] + H2O + 2 H(+). It participates in plant hormone biosynthesis; gibberellin biosynthesis. In terms of biological role, catalyzes three successive oxidations of ent-kaurenoic acid giving gibberellin 12 (GA12), a key step in gibberellins (GAs) biosynthesis. GAs, which are involved many processes, including stem elongation, play a central role in plant development. The sequence is that of Ent-kaurenoic acid oxidase 2 from Arabidopsis thaliana (Mouse-ear cress).